Reading from the N-terminus, the 265-residue chain is Protein Msed_2121 (265 aa).

It belongs to the CinA family.

This chain is Protein Msed_2121, found in Metallosphaera sedula (strain ATCC 51363 / DSM 5348 / JCM 9185 / NBRC 15509 / TH2).